Reading from the N-terminus, the 1002-residue chain is Inversin-B (1002 aa).

ANK repeat units follow at residues 9–39, 43–72, 76–105, 109–140, 144–173, 177–209, 216–246, 250–279, 284–313, 317–346, 352–381, 385–414, 418–447, 451–480, 484–513, and 519–549; these read SLAS…VIDQ, LGRT…KVNR, SGRT…DCTH, CDIT…QVDA, RKQT…NIGI, EGKI…TESL, EGRT…NVAP, LFRT…SPNI, QGAT…VRDE, EGRT…KLEV, YGGT…QADA, MKHT…KVHL, DGRS…NPDA, EGRT…DPNI, NGRT…FPNQ, and ERYT…SIAA. A D-box 1 motif is present at residues 486-494; that stretch reads RTALHWSCN. The IQ 1 domain maps to 551–580; the sequence is QDIAAFKIQAVYKGHKVRRAFQERKNLLMK. Composition is skewed to basic and acidic residues over residues 586–599, 609–621, and 643–656; these read KGAA…ENRQ, KQKD…RQNK, and AEDR…ENLE. 2 disordered regions span residues 586–804 and 862–886; these read KGAA…KGRR and SAKT…SSSA. Polar residues-rich tracts occupy residues 670-680 and 687-706; these read QRITAQIQSSP and NSIQ…SSPL. Composition is skewed to basic and acidic residues over residues 733-763 and 770-796; these read HQME…EERK and QSSD…EGKK. A D-box 2 motif is present at residues 959-967; sequence RKQLFQRKN. Residues 966–995 form the IQ 2 domain; it reads KNHAATVIQKAWRTYWVRKSSCKTRHSRSQ.

In terms of assembly, interacts with apc2. Binds calmodulin.

Its subcellular location is the cytoplasm. It is found in the cytoskeleton. Functionally, required for normal renal development and establishment of left-right axis. Probably acts as a molecular switch between different Wnt signaling pathways. Inhibits the canonical Wnt pathway by targeting cytoplasmic disheveled for degradation by the ubiquitin-proteasome. This suggests that it is required in renal development to oppose the repression of terminal differentiation of tubular epithelial cells by Wnt signaling. Plays a central role in convergent extension movements in gastrulating embryos, a processus regulated by Wnt signaling. This chain is Inversin-B (invs-b), found in Xenopus laevis (African clawed frog).